The primary structure comprises 219 residues: Redox-sensing transcriptional repressor Rex (219 aa).

A DNA-binding region (H-T-H motif) is located at residues 18 to 57 (LYYRFIQSLYNSGKLRVSSAELSEAVKVDSATIRRDFSYF). Residue 92–97 (GVGHLG) participates in NAD(+) binding.

It belongs to the transcriptional regulatory Rex family. Homodimer.

It localises to the cytoplasm. In terms of biological role, modulates transcription in response to changes in cellular NADH/NAD(+) redox state. This is Redox-sensing transcriptional repressor Rex from Exiguobacterium sibiricum (strain DSM 17290 / CCUG 55495 / CIP 109462 / JCM 13490 / 255-15).